The primary structure comprises 389 residues: Chalcone synthase 1 (389 aa).

The active site involves Cys163.

This sequence belongs to the thiolase-like superfamily. Chalcone/stilbene synthases family.

It catalyses the reaction (E)-4-coumaroyl-CoA + 3 malonyl-CoA + 3 H(+) = 2',4,4',6'-tetrahydroxychalcone + 3 CO2 + 4 CoA. The protein operates within secondary metabolite biosynthesis; flavonoid biosynthesis. The primary product of this enzyme is 4,2',4',6'-tetrahydroxychalcone (also termed naringenin-chalcone or chalcone) which can under specific conditions spontaneously isomerize into naringenin. The protein is Chalcone synthase 1 (CHS1) of Citrus sinensis (Sweet orange).